Here is a 573-residue protein sequence, read N- to C-terminus: DEAD-box ATP-dependent RNA helicase 47B (573 aa).

Residues 131-159 carry the Q motif motif; that stretch reads KSFEELGLPPLLIDRLNKEGLSTPTEVQS. Residues 162-362 form the Helicase ATP-binding domain; it reads IPIISQKHDA…RSWGHDPVLV (201 aa). Position 175-182 (175-182) interacts with ATP; sequence SYTGSGKT. The DEAD box motif lies at 293–296; it reads DEVD. The 145-residue stretch at 421–565 folds into the Helicase C-terminal domain; it reads TLRRCIHALE…PCEFTEGKLL (145 aa).

It belongs to the DEAD box helicase family.

It catalyses the reaction ATP + H2O = ADP + phosphate + H(+). The polypeptide is DEAD-box ATP-dependent RNA helicase 47B (Oryza sativa subsp. japonica (Rice)).